The chain runs to 459 residues: UDP-N-acetylmuramate--L-alanine ligase (459 aa).

118 to 124 (GTHGKTT) lines the ATP pocket.

It belongs to the MurCDEF family.

Its subcellular location is the cytoplasm. It carries out the reaction UDP-N-acetyl-alpha-D-muramate + L-alanine + ATP = UDP-N-acetyl-alpha-D-muramoyl-L-alanine + ADP + phosphate + H(+). The protein operates within cell wall biogenesis; peptidoglycan biosynthesis. Functionally, cell wall formation. The sequence is that of UDP-N-acetylmuramate--L-alanine ligase from Clostridium beijerinckii (strain ATCC 51743 / NCIMB 8052) (Clostridium acetobutylicum).